The chain runs to 1247 residues: Structural polyprotein (1247 aa).

The tract at residues Arg-36 to Lys-67 is host transcription inhibition. Residues Leu-53–Arg-103 are disordered. 2 stretches are compositionally biased toward basic residues: residues Lys-59 to Gln-71 and Asn-81 to Arg-100. The short motif at Pro-60–Pro-98 is the Nuclear localization signal element. The binding to the viral RNA stretch occupies residues Lys-83 to Ile-113. The ribosome-binding stretch occupies residues Pro-98 to Cys-112. Cys-112 and Cys-127 are disulfide-bonded. The Peptidase S3 domain maps to Cys-112–Trp-260. His-138 acts as the Charge relay system in catalysis. The Nuclear export signal motif lies at Ile-143–Phe-153. The tract at residues Lys-154 to Tyr-159 is interaction with spike glycoprotein E2. Asp-160 serves as the catalytic Charge relay system. The tract at residues Pro-182–Ala-192 is dimerization of the capsid protein. Ser-212 serves as the catalytic Charge relay system. The dimerization of the capsid protein stretch occupies residues Asp-218–Arg-222. The functions as an uncleaved signal peptide for the precursor of protein E3/E2 stretch occupies residues Ser-261–Thr-273. 9 disulfides stabilise this stretch: Cys-268-Cys-277, Cys-282-Cys-286, Cys-285-Cys-317, Cys-343-Cys-449, Cys-346-Cys-352, Cys-415-Cys-429, Cys-477-Cys-590, Cys-525-Cys-549, and Cys-527-Cys-544. A glycan (N-linked (GlcNAc...) asparagine; by host) is linked at Asn-272. The Extracellular segment spans residues Asn-325–Thr-691. A glycan (N-linked (GlcNAc...) asparagine; by host) is linked at Asn-587. A helical transmembrane segment spans residues Ile-692–Met-712. The Cytoplasmic portion of the chain corresponds to Cys-713–Ala-747. The segment at Cys-715 to Arg-719 is interaction with the capsid protein. 3 S-palmitoyl cysteine; by host lipidation sites follow: Cys-720, Cys-740, and Cys-741. Residues Cys-720–Cys-740 are transient transmembrane before p62-6K protein processing. Residues Cys-720 and Cys-741 are joined by a disulfide bond. Topologically, residues Ala-748–Gln-762 are extracellular. A helical transmembrane segment spans residues Pro-763–Leu-783. Residues Lys-784–Pro-787 are Cytoplasmic-facing. A helical membrane pass occupies residues Cys-788–Ala-808. Residues Tyr-809–Gly-1223 are Extracellular-facing. Cystine bridges form between Cys-857–Cys-922, Cys-870–Cys-902, Cys-871–Cys-904, and Cys-876–Cys-886. Residues Val-892–Thr-909 form an E1 fusion peptide loop region. 2 N-linked (GlcNAc...) asparagine; by host glycosylation sites follow: Asn-949 and Asn-1078. Cystine bridges form between Cys-1067-Cys-1079, Cys-1109-Cys-1184, Cys-1114-Cys-1188, and Cys-1136-Cys-1178. Residues Gly-1224–Phe-1244 traverse the membrane as a helical segment. Residue Cys-1241 is the site of S-palmitoyl cysteine; by host attachment. The Cytoplasmic portion of the chain corresponds to Ser-1245–His-1247.

Homodimer. Homomultimer. Interacts with host karyopherin KPNA4; this interaction allows the nuclear import of the viral capsid protein. Interacts with spike glycoprotein E2. Interacts with host IRAK1; the interaction leads to inhibition of IRAK1-dependent signaling. In terms of assembly, the precursor of protein E3/E2 and E1 form a heterodimer shortly after synthesis. As to quaternary structure, the precursor of protein E3/E2 and E1 form a heterodimer shortly after synthesis. Processing of the precursor of protein E3/E2 into E2 and E3 results in a heterodimer of the spike glycoproteins E2 and E1. Spike at virion surface are constituted of three E2-E1 heterodimers. After target cell attachment and endocytosis, E1 change conformation to form homotrimers. Interacts with 6K protein. Interacts with spike glycoprotein E1. Processing of the precursor of protein E3/E2 into E2 and E3 results in a heterodimer of the spike glycoproteins E2 and E1. Spike at virion surface are constituted of a trimer of E2-E1 heterodimers. Interacts with 6K protein. Interacts with host MXRA8; this interaction mediates virus entry. In terms of assembly, oligomer. Interacts with spike glycoprotein E1. Interacts with spike glycoprotein E2. Post-translationally, structural polyprotein: Specific enzymatic cleavages in vivo yield mature proteins. Capsid protein is auto-cleaved during polyprotein translation, unmasking a signal peptide at the N-terminus of the precursor of E3/E2. The remaining polyprotein is then targeted to the host endoplasmic reticulum, where host signal peptidase cleaves it into pE2, 6K and E1 proteins. pE2 is further processed to mature E3 and E2 by host furin in trans-Golgi vesicle. Palmitoylated via thioester bonds. These palmitoylations may induce disruption of the C-terminus transmembrane. This would result in the reorientation of E2 C-terminus from lumenal to cytoplasmic side. In terms of processing, N-glycosylated. Post-translationally, palmitoylated via thioester bonds.

The protein resides in the virion. Its subcellular location is the host cytoplasm. It localises to the host cell membrane. It is found in the host nucleus. The protein localises to the virion membrane. The protein resides in the host Golgi apparatus. Its subcellular location is the host trans-Golgi network. It localises to the host endoplasmic reticulum. The enzyme catalyses Autocatalytic release of the core protein from the N-terminus of the togavirus structural polyprotein by hydrolysis of a -Trp-|-Ser- bond.. Its function is as follows. Forms an icosahedral capsid with a T=4 symmetry composed of 240 copies of the capsid protein surrounded by a lipid membrane through which penetrate 80 spikes composed of trimers of E1-E2 heterodimers. The capsid protein binds to the viral RNA genome at a site adjacent to a ribosome binding site for viral genome translation following genome release. Possesses a protease activity that results in its autocatalytic cleavage from the nascent structural protein. Following its self-cleavage, the capsid protein transiently associates with ribosomes, and within several minutes the protein binds to viral RNA and rapidly assembles into icosahedric core particles. The resulting nucleocapsid eventually associates with the cytoplasmic domain of the spike glycoprotein E2 at the cell membrane, leading to budding and formation of mature virions. In case of infection, new virions attach to target cells and after clathrin-mediated endocytosis their membrane fuses with the host endosomal membrane. This leads to the release of the nucleocapsid into the cytoplasm, followed by an uncoating event necessary for the genomic RNA to become accessible. The uncoating might be triggered by the interaction of capsid proteins with ribosomes. Binding of ribosomes would release the genomic RNA since the same region is genomic RNA-binding and ribosome-binding. Specifically inhibits interleukin-1 receptor-associated kinase 1/IRAK1-dependent signaling during viral entry, representing a means by which the alphaviruses may evade innate immune detection and activation prior to viral gene expression. In terms of biological role, provides the signal sequence for the translocation of the precursor of protein E3/E2 to the host endoplasmic reticulum. Furin-cleaved E3 remains associated with spike glycoprotein E1 and mediates pH protection of the latter during the transport via the secretory pathway. After virion release from the host cell, the assembly protein E3 is gradually released in the extracellular space. Functionally, plays a role in viral attachment to target host cell, by binding to the cell receptor MXRA8. Synthesized as a p62 precursor which is processed by furin at the cell membrane just before virion budding, giving rise to E2-E1 heterodimer. The p62-E1 heterodimer is stable, whereas E2-E1 is unstable and dissociate at low pH. p62 is processed at the last step, presumably to avoid E1 fusion activation before its final export to cell surface. E2 C-terminus contains a transitory transmembrane that would be disrupted by palmitoylation, resulting in reorientation of the C-terminal tail from lumenal to cytoplasmic side. This step is critical since E2 C-terminus is involved in budding by interacting with capsid proteins. This release of E2 C-terminus in cytoplasm occurs lately in protein export, and precludes premature assembly of particles at the endoplasmic reticulum membrane. Acts as a viroporin that participates in virus glycoprotein processing and transport to the plasma membrane, cell permeabilization and budding of viral particles. Disrupts the calcium homeostasis of the cell, probably at the endoplasmic reticulum level. This leads to cytoplasmic calcium elevation. Because of its lipophilic properties, the 6K protein is postulated to influence the selection of lipids that interact with the transmembrane domains of the glycoproteins, which, in turn, affects the deformability of the bilayer required for the extreme curvature that occurs as budding proceeds. Present in low amount in virions, about 3% compared to viral glycoproteins. Its function is as follows. Class II viral fusion protein. Fusion activity is inactive as long as E1 is bound to E2 in mature virion. After virus attachment to target cell via host MXRA8 and endocytosis, acidification of the endosome induce dissociation of E1/E2 heterodimer and concomitant trimerization of the E1 subunits. This E1 trimer is fusion active, and promotes release of viral nucleocapsid in cytoplasm after endosome and viral membrane fusion. Efficient fusion requires the presence of cholesterol and sphingolipid in the target membrane. The protein is Structural polyprotein of Anopheles (Human).